A 542-amino-acid chain; its full sequence is Chaperonin GroEL (542 aa).

Residues Thr29–Pro32, Asp86–Thr90, Gly413, Asn476–Ala478, and Asp492 contribute to the ATP site.

The protein belongs to the chaperonin (HSP60) family. As to quaternary structure, forms a cylinder of 14 subunits composed of two heptameric rings stacked back-to-back. Interacts with the co-chaperonin GroES.

The protein resides in the cytoplasm. It catalyses the reaction ATP + H2O + a folded polypeptide = ADP + phosphate + an unfolded polypeptide.. Functionally, together with its co-chaperonin GroES, plays an essential role in assisting protein folding. The GroEL-GroES system forms a nano-cage that allows encapsulation of the non-native substrate proteins and provides a physical environment optimized to promote and accelerate protein folding. The chain is Chaperonin GroEL from Bacillus cytotoxicus (strain DSM 22905 / CIP 110041 / 391-98 / NVH 391-98).